The sequence spans 217 residues: MPETEKPLFGHPWIFIRGVPSLTFLPPEGPSEVAFAGRSNVGKSSLINALVGQKGLARTSNTPGRTQELNYFVPDGYSGEGGDLPPMAIVDMPGYGYAQAPKEQVDKWTKLVFDYLRGRATLKRVYVLIDSRHGIKKNDEDVLTLLDKAAVSYQLVLTKTDKIKAPAVPKLLAETADKIRKRPAAYPAVLSTSSEKGDGLDDLRQAIAQTVGIANWE.

The EngB-type G domain occupies 29–213 (GPSEVAFAGR…RQAIAQTVGI (185 aa)). GTP contacts are provided by residues 37-44 (GRSNVGKS), 64-68 (GRTQE), 91-94 (DMPG), 158-161 (TKTD), and 192-194 (TSS). 2 residues coordinate Mg(2+): S44 and T66.

It belongs to the TRAFAC class TrmE-Era-EngA-EngB-Septin-like GTPase superfamily. EngB GTPase family. Mg(2+) is required as a cofactor.

Functionally, necessary for normal cell division and for the maintenance of normal septation. This chain is Probable GTP-binding protein EngB, found in Rhizobium etli (strain CIAT 652).